We begin with the raw amino-acid sequence, 335 residues long: Fimbrial adhesin PapGIII (335 aa).

The first 21 residues, 1 to 21 (MKKWLPAFLFLSLSGCNDALA), serve as a signal peptide directing secretion.

The protein belongs to the adhesin PapG family.

The protein resides in the secreted. The protein localises to the fimbrium. In terms of biological role, tip adhesin component of type P pili that binds preferentially to Gal-alpha(1-4)-Gal-containing glycolipids such as globoside. This tip is common in E.coli strains that cause human cystitis, but rare in pyelonephritic isolates. This chain is Fimbrial adhesin PapGIII, found in Escherichia coli.